A 320-amino-acid polypeptide reads, in one-letter code: SPX domain-containing protein 4 (320 aa).

Positions Met1–Gln170 constitute an SPX domain. Disordered regions lie at residues Ser209 to Glu233 and Cys275 to Glu320. The segment covering Ala278–Ser289 has biased composition (polar residues). Over residues Gln290–Lys299 the composition is skewed to acidic residues. Residues Arg304–Ala313 are compositionally biased toward polar residues.

Homodimer. Interacts (via N-terminus) with PHR2 (via C-terminus) in the presence of inositol polyphosphate. Interacts with BHLH6. Degraded under Pi starvation conditions through the ubiquitin/26S proteasome pathway. Widely expressed. Detected in root cells, with the exception of epidermis, and in mesophyll and vascular bundles in leaves.

The protein resides in the membrane. Its subcellular location is the nucleus. It is found in the cytoplasm. Functionally, inositol polyphosphate sensor that associates with transcription factors to regulate Pi starvation responses. The SPX domain provides a basic binding surface for inositol polyphosphate signaling molecules. Interacts with PHR2 to inhibit its translocation to the nucleus and repress its DNA-binding activity, and then negatively regulate Pi signaling. This Oryza sativa subsp. japonica (Rice) protein is SPX domain-containing protein 4.